Consider the following 474-residue polypeptide: MAKEISSELLNTILTRVGGPGNIASCGNCMTRLRLGVHDSSLVDPNIKTLEGVKGVILTSDQVQVVFGPGKAHRATKAMSELLGEAPVQDAAEIAAQNKRQLKAKQTSGVQQFLAKFATIFTPLIPGFIAAGLLLGIATLIATVMHVPADAQGTLPDALNFMKVFSKGLFTFLVILVGYNAAQAFGGTGVNGAIIAALFLLGYNPAATTGYYAGFHDFFGLPIDPRGNIIGVLIAAWACARIEGMVRRFMPDDLDMLLTSLITLLITATLAYLIIMPLGGWLFEGMSWLFMHLNSNPLGCAVLAGLFLIAVVFGVHQGFIPVYLALMDSQGFNSLFPILSMAGAGQVGAALALYWRAQPHSGLRSQVRGAIIPGLLGVGEPLIYGVTLPRMKPFITACLGGAAGGLFIGLIAWWGLPMGLNSAFGPSGLVALPLMTSAQGILPAMAIYAGGILVAWVCGFIFTTLFGCRNVNLD.

The PTS EIIB type-1 domain maps to 1-89; that stretch reads MAKEISSELL…SELLGEAPVQ (89 aa). Topologically, residues 1–123 are cytoplasmic; it reads MAKEISSELL…LAKFATIFTP (123 aa). Residue Cys29 is the Phosphocysteine intermediate; for EIIB activity of the active site. One can recognise a PTS EIIC type-1 domain in the interval 115-474; it reads AKFATIFTPL…LFGCRNVNLD (360 aa). A helical transmembrane segment spans residues 124–144; the sequence is LIPGFIAAGLLLGIATLIATV. Residues 145 to 157 lie on the Periplasmic side of the membrane; the sequence is MHVPADAQGTLPD. Residues 158 to 178 form a helical membrane-spanning segment; it reads ALNFMKVFSKGLFTFLVILVG. Residues 179–180 are Cytoplasmic-facing; the sequence is YN. Residues 181–201 form a helical membrane-spanning segment; sequence AAQAFGGTGVNGAIIAALFLL. Residues 202-217 are Periplasmic-facing; that stretch reads GYNPAATTGYYAGFHD. Residues 218-238 traverse the membrane as a helical segment; it reads FFGLPIDPRGNIIGVLIAAWA. The Cytoplasmic segment spans residues 239 to 260; the sequence is CARIEGMVRRFMPDDLDMLLTS. A helical membrane pass occupies residues 261–281; sequence LITLLITATLAYLIIMPLGGW. The Periplasmic portion of the chain corresponds to 282 to 301; sequence LFEGMSWLFMHLNSNPLGCA. A helical membrane pass occupies residues 302–322; that stretch reads VLAGLFLIAVVFGVHQGFIPV. Residues 323-334 are Cytoplasmic-facing; the sequence is YLALMDSQGFNS. The chain crosses the membrane as a helical span at residues 335–355; that stretch reads LFPILSMAGAGQVGAALALYW. Residues 356 to 368 lie on the Periplasmic side of the membrane; sequence RAQPHSGLRSQVR. Residues 369-389 form a helical membrane-spanning segment; the sequence is GAIIPGLLGVGEPLIYGVTLP. Topologically, residues 390–393 are cytoplasmic; sequence RMKP. A helical membrane pass occupies residues 394 to 414; it reads FITACLGGAAGGLFIGLIAWW. The Periplasmic portion of the chain corresponds to 415 to 440; it reads GLPMGLNSAFGPSGLVALPLMTSAQG. The chain crosses the membrane as a helical span at residues 441 to 461; the sequence is ILPAMAIYAGGILVAWVCGFI. Topologically, residues 462 to 474 are cytoplasmic; the sequence is FTTLFGCRNVNLD.

The protein resides in the cell inner membrane. It catalyses the reaction N-acetyl-beta-D-muramate(out) + N(pros)-phospho-L-histidyl-[protein] = N-acetyl-beta-D-muramate 6-phosphate(in) + L-histidyl-[protein]. Functionally, the phosphoenolpyruvate-dependent sugar phosphotransferase system (sugar PTS), a major carbohydrate active transport system, catalyzes the phosphorylation of incoming sugar substrates concomitantly with their translocation across the cell membrane. This system is involved in N-acetylmuramic acid (MurNAc) transport, yielding cytoplasmic MurNAc-6-P. Is also able to take up anhydro-N-acetylmuramic acid (anhMurNAc), but cannot phosphorylate the carbon 6, probably because of the 1,6-anhydro ring. This is PTS system N-acetylmuramic acid-specific EIIBC component (murP) from Shigella dysenteriae serotype 1 (strain Sd197).